The following is a 161-amino-acid chain: Peroxynitrite isomerase 2 (161 aa).

A GXWXGXG motif is present at residues Gly17–Gly23. His152 lines the heme b pocket.

It belongs to the nitrobindin family. Homodimer. Heme b is required as a cofactor.

The enzyme catalyses peroxynitrite = nitrate. It participates in nitrogen metabolism. Heme-binding protein able to scavenge peroxynitrite and to protect free L-tyrosine against peroxynitrite-mediated nitration, by acting as a peroxynitrite isomerase that converts peroxynitrite to nitrate. Therefore, this protein likely plays a role in peroxynitrite sensing and in the detoxification of reactive nitrogen and oxygen species (RNS and ROS, respectively). Is able to bind nitric oxide (NO) in vitro, but may act as a sensor of peroxynitrite levels in vivo. The protein is Peroxynitrite isomerase 2 of Mycobacterium avium (strain 104).